A 356-amino-acid polypeptide reads, in one-letter code: Protein-arginine kinase (356 aa).

The region spanning 24-254 is the Phosphagen kinase C-terminal domain; sequence IVLSTRIRLA…HQLIQQEKAA (231 aa). ATP-binding positions include 27 to 31, histidine 92, arginine 125, 176 to 180, and 207 to 212; these read STRIR, RASVM, and RGIYGE. An RDXXRA motif of the pArg binding pocket involved in allosteric regulation motif is present at residues 337–342; the sequence is RDYRRA.

This sequence belongs to the ATP:guanido phosphotransferase family.

It carries out the reaction L-arginyl-[protein] + ATP = N(omega)-phospho-L-arginyl-[protein] + ADP + H(+). Its activity is regulated as follows. Appears to be allosterically activated by the binding of pArg-containing polypeptides to the pArg-binding pocket localized in the C-terminal domain of McsB. Its function is as follows. Catalyzes the specific phosphorylation of arginine residues in a large number of proteins. Is part of the bacterial stress response system. Protein arginine phosphorylation has a physiologically important role and is involved in the regulation of many critical cellular processes, such as protein homeostasis, motility, competence, and stringent and stress responses, by regulating gene expression and protein activity. The chain is Protein-arginine kinase from Bacillus cytotoxicus (strain DSM 22905 / CIP 110041 / 391-98 / NVH 391-98).